The sequence spans 508 residues: Maturase K (508 aa).

Belongs to the intron maturase 2 family. MatK subfamily.

The protein resides in the plastid. It localises to the chloroplast. In terms of biological role, usually encoded in the trnK tRNA gene intron. Probably assists in splicing its own and other chloroplast group II introns. The chain is Maturase K from Ranunculus glacialis (Glacier buttercup).